The sequence spans 193 residues: DNA damage-inducible transcript 4-like protein (193 aa).

Belongs to the DDIT4 family.

Its subcellular location is the cytoplasm. In terms of biological role, inhibits cell growth by regulating the TOR signaling pathway upstream of the TSC1-TSC2 complex and downstream of AKT1. This chain is DNA damage-inducible transcript 4-like protein (DDIT4L), found in Pongo abelii (Sumatran orangutan).